Reading from the N-terminus, the 215-residue chain is ATP phosphoribosyltransferase (215 aa).

This sequence belongs to the ATP phosphoribosyltransferase family. Short subfamily. Heteromultimer composed of HisG and HisZ subunits.

The protein localises to the cytoplasm. It catalyses the reaction 1-(5-phospho-beta-D-ribosyl)-ATP + diphosphate = 5-phospho-alpha-D-ribose 1-diphosphate + ATP. It functions in the pathway amino-acid biosynthesis; L-histidine biosynthesis; L-histidine from 5-phospho-alpha-D-ribose 1-diphosphate: step 1/9. In terms of biological role, catalyzes the condensation of ATP and 5-phosphoribose 1-diphosphate to form N'-(5'-phosphoribosyl)-ATP (PR-ATP). Has a crucial role in the pathway because the rate of histidine biosynthesis seems to be controlled primarily by regulation of HisG enzymatic activity. The polypeptide is ATP phosphoribosyltransferase (Cyanothece sp. (strain PCC 7425 / ATCC 29141)).